A 168-amino-acid chain; its full sequence is Xanthine-guanine phosphoribosyltransferase (168 aa).

Residues 43–44 (RG) and 102–110 (DDLVDTGAT) each bind 5-phospho-alpha-D-ribose 1-diphosphate. Asp103 lines the Mg(2+) pocket. Residues Asp106 and Ile149 each contribute to the guanine site. Residues Asp106 and Ile149 each contribute to the xanthine site. GMP contacts are provided by residues 106–110 (DTGAT) and 148–149 (WI).

It belongs to the purine/pyrimidine phosphoribosyltransferase family. XGPT subfamily. Homotetramer. It depends on Mg(2+) as a cofactor.

The protein resides in the cell inner membrane. The catalysed reaction is GMP + diphosphate = guanine + 5-phospho-alpha-D-ribose 1-diphosphate. It catalyses the reaction XMP + diphosphate = xanthine + 5-phospho-alpha-D-ribose 1-diphosphate. It carries out the reaction IMP + diphosphate = hypoxanthine + 5-phospho-alpha-D-ribose 1-diphosphate. It participates in purine metabolism; GMP biosynthesis via salvage pathway; GMP from guanine: step 1/1. Its pathway is purine metabolism; XMP biosynthesis via salvage pathway; XMP from xanthine: step 1/1. In terms of biological role, purine salvage pathway enzyme that catalyzes the transfer of the ribosyl-5-phosphate group from 5-phospho-alpha-D-ribose 1-diphosphate (PRPP) to the N9 position of the 6-oxopurines guanine and xanthine to form the corresponding ribonucleotides GMP (guanosine 5'-monophosphate) and XMP (xanthosine 5'-monophosphate), with the release of PPi. To a lesser extent, also acts on hypoxanthine. This is Xanthine-guanine phosphoribosyltransferase from Nitrobacter winogradskyi (strain ATCC 25391 / DSM 10237 / CIP 104748 / NCIMB 11846 / Nb-255).